Consider the following 477-residue polypeptide: Aspartyl/glutamyl-tRNA(Asn/Gln) amidotransferase subunit B (477 aa).

This sequence belongs to the GatB/GatE family. GatB subfamily. In terms of assembly, heterotrimer of A, B and C subunits.

The enzyme catalyses L-glutamyl-tRNA(Gln) + L-glutamine + ATP + H2O = L-glutaminyl-tRNA(Gln) + L-glutamate + ADP + phosphate + H(+). It carries out the reaction L-aspartyl-tRNA(Asn) + L-glutamine + ATP + H2O = L-asparaginyl-tRNA(Asn) + L-glutamate + ADP + phosphate + 2 H(+). In terms of biological role, allows the formation of correctly charged Asn-tRNA(Asn) or Gln-tRNA(Gln) through the transamidation of misacylated Asp-tRNA(Asn) or Glu-tRNA(Gln) in organisms which lack either or both of asparaginyl-tRNA or glutaminyl-tRNA synthetases. The reaction takes place in the presence of glutamine and ATP through an activated phospho-Asp-tRNA(Asn) or phospho-Glu-tRNA(Gln). The protein is Aspartyl/glutamyl-tRNA(Asn/Gln) amidotransferase subunit B of Ligilactobacillus salivarius (strain UCC118) (Lactobacillus salivarius).